We begin with the raw amino-acid sequence, 284 residues long: Tropomyosin (284 aa).

Residues 1-39 form a disordered region; it reads MDAIKKKMQAMKLEKDNAMDRADTLEQQNKEANIRAEKT. Positions 1–284 form a coiled coil; sequence MDAIKKKMQA…DQTFSELSGY (284 aa). A compositionally biased stretch (basic and acidic residues) spans 12–39; sequence KLEKDNAMDRADTLEQQNKEANIRAEKT.

This sequence belongs to the tropomyosin family. Homodimer.

Tropomyosin, in association with the troponin complex, plays a central role in the calcium dependent regulation of muscle contraction. In Homarus americanus (American lobster), this protein is Tropomyosin (TM1).